The following is a 537-amino-acid chain: Synaptotagmin-C (537 aa).

Over 1–52 (MSGDGEDELCRNALALVNELCFSVRGNHNNEKCIEFSYLLRDRDRTRHIETD) the chain is Vesicular. Residues 53–78 (ISVSLLSVIVTFCGIVLLGVSLFVSW) traverse the membrane as a helical segment. Residues 79–537 (KLCWIPWRDK…TIVVESPHSV (459 aa)) are Cytoplasmic-facing. 2 disordered regions span residues 92–111 (PQRRDSQHHPHQHLHHHHSH) and 142–200 (IKLS…EFGT). The segment covering 100–110 (HPHQHLHHHHS) has biased composition (basic residues). Polar residues predominate over residues 143–174 (KLSQTSPDIPVDTSSGSKENNIPNAHSQQQVS). Residues 228-477 (EAKKHQKVNC…VIGMCRVGNA (250 aa)) are phospholipid binding. C2 domains follow at residues 236-357 (NCGR…TIWR) and 368-501 (DLGE…EQWH). The Ca(2+) site is built by D267, D273, D325, F326, D327, S330, D333, D399, D405, D459, and D461.

Belongs to the synaptotagmin family. Homodimer or homotrimer (possible). The cofactor is Ca(2+).

It is found in the cytoplasmic vesicle. The protein resides in the secretory vesicle. Its subcellular location is the synaptic vesicle membrane. It localises to the synapse. Its function is as follows. May have a regulatory role in the membrane interactions during trafficking of synaptic vesicles at the active zone of the synapse. It binds acidic phospholipids with a specificity that requires the presence of both an acidic head group and a diacyl backbone. This is Synaptotagmin-C (P65-C) from Diplobatis ommata (Ocellated electric ray).